A 474-amino-acid polypeptide reads, in one-letter code: MATGWGSLLQDEQQLEELARQAVDRALAEGVLLRTSQAPSSSHVVSYAPFTLFPSPVPSALLEQAYAVQADFNLLVDAVSQNAVFLEQTLSSTIKRDSFTARLFDIHKQVLKEGIAQTVFLGLNRSDYMFQCNPDGSAALKQIEINTVSASFGGLASRTPAVHRHVLSVLGKTKEAAKILSNNPSKGLAMGIAKAWELYGSANAQVLLIAQEKERNIFDQRAIENELLARNIHVIRRKFEDVSEKGSLDQDRRLFMDGQEIAVVYFRDGYMPGHYSLQNWEARLLLERSCAVKCPDIATQLAGTKKVQQELSRVGVLESFLPGQPEAVARLRATFAGLYSLDLGEEGDQAITKAIAAPSCFVLKPQREGGGNNLYGEEMVQALERLKDSEERASYILMEKIEPEPFRNCLLRPGSPARVIQCISELGIFGVYVREGKTLVMNKHVGHLLRTKAIEHADGGVAAGVAVLDNPYPV.

At alanine 2 the chain carries N-acetylalanine. Position 125 (arginine 125) interacts with substrate. Glutamate 144 is an ATP binding site. Mg(2+) is bound by residues glutamate 144 and asparagine 146. Substrate is bound by residues 148–151 (VSAS), 214–216 (ERN), glutamine 220, and 267–270 (RDGY). ATP is bound by residues lysine 305, 364–373 (KPQREGGGNN), tyrosine 375, and 398–401 (MEKI). Glutamate 368 is a Mg(2+) binding site. The residue at position 415 (serine 415) is a Phosphoserine. Glutamate 425 provides a ligand contact to ATP. Substrate is bound at residue arginine 450. ATP contacts are provided by lysine 452 and aspartate 458. A substrate-binding site is contributed by 461–462 (VA).

It belongs to the eukaryotic GSH synthase family. Homodimer. The cofactor is Mg(2+).

The enzyme catalyses gamma-L-glutamyl-L-cysteine + glycine + ATP = glutathione + ADP + phosphate + H(+). It carries out the reaction gamma-L-glutamyl-(2S)-2-aminobutanoate + glycine + ATP = ophthalmate + ADP + phosphate + H(+). Its pathway is sulfur metabolism; glutathione biosynthesis; glutathione from L-cysteine and L-glutamate: step 2/2. Catalyzes the production of glutathione from gamma-glutamylcysteine and glycine in an ATP-dependent manner. Glutathione (gamma-glutamylcysteinylglycine, GSH) is the most abundant intracellular thiol in living aerobic cells and is required for numerous processes including the protection of cells against oxidative damage, amino acid transport, the detoxification of foreign compounds, the maintenance of protein sulfhydryl groups in a reduced state and acts as a cofactor for a number of enzymes. Participates in ophthalmate biosynthesis in hepatocytes. This Bos taurus (Bovine) protein is Glutathione synthetase.